A 442-amino-acid polypeptide reads, in one-letter code: Probable alpha-galactosidase B (442 aa).

The first 19 residues, 1–19 (MQRYISLSVSLSLLSGANA), serve as a signal peptide directing secretion. 2 disulfide bridges follow: cysteine 42/cysteine 74 and cysteine 124/cysteine 154. Aspartate 152 (nucleophile) is an active-site residue. 4 N-linked (GlcNAc...) asparagine glycosylation sites follow: asparagine 159, asparagine 173, asparagine 179, and asparagine 215. 224-228 (EWGQA) lines the substrate pocket. N-linked (GlcNAc...) asparagine glycosylation occurs at asparagine 235. Catalysis depends on aspartate 246, which acts as the Proton donor. N-linked (GlcNAc...) asparagine glycosylation is present at asparagine 285.

This sequence belongs to the glycosyl hydrolase 27 family.

The protein resides in the secreted. It carries out the reaction Hydrolysis of terminal, non-reducing alpha-D-galactose residues in alpha-D-galactosides, including galactose oligosaccharides, galactomannans and galactolipids.. Functionally, hydrolyzes a variety of simple alpha-D-galactoside as well as more complex molecules such as oligosaccharides and polysaccharides. The protein is Probable alpha-galactosidase B (aglB) of Aspergillus oryzae (strain ATCC 42149 / RIB 40) (Yellow koji mold).